Reading from the N-terminus, the 1219-residue chain is DNA ligase 4 (1219 aa).

Residues Glu-251, Lys-253, Arg-258, Arg-273, Glu-303, Phe-342, Glu-418, Lys-423, Arg-434, Lys-440, and Lys-442 each contribute to the ATP site. Lys-253 functions as the N6-AMP-lysine intermediate in the catalytic mechanism. Glu-303 serves as a coordination point for Mg(2+). Position 418 (Glu-418) interacts with Mg(2+). The segment at 604 to 632 is disordered; that stretch reads NGTTQKQKESESTQDNPKVNKSSKRGEKK. BRCT domains follow at residues 651–739 and 807–909; these read GKTS…PKYF and VYFY…VYTL. 2 disordered regions span residues 914 to 1126 and 1146 to 1197; these read MEES…MDMK and IPSQ…SDVV. Residues 932–960 are compositionally biased toward polar residues; the sequence is VASQGSAQTKEPASSKIAITSSRGRSNTR. A compositionally biased stretch (basic residues) spans 1042–1051; the sequence is QRSRRGKKAA. The span at 1056-1065 shows a compositional bias: acidic residues; it reads DESDENDELD. Basic and acidic residues-rich tracts occupy residues 1084-1096 and 1117-1126; these read VENEETREPDIAK and RNAKTEMDMK. Residues 1148–1159 are compositionally biased toward polar residues; it reads SQKTTETSNRTT.

This sequence belongs to the ATP-dependent DNA ligase family. Interacts with XRCC4 via its tandem BRCT domains. Interacts with POLL. It depends on Mg(2+) as a cofactor. As to expression, widely expressed, with higher levels in young flowers and roots.

The protein resides in the nucleus. It catalyses the reaction ATP + (deoxyribonucleotide)n-3'-hydroxyl + 5'-phospho-(deoxyribonucleotide)m = (deoxyribonucleotide)n+m + AMP + diphosphate.. Functionally, DNA ligase involved in DNA non-homologous end joining (NHEJ); required for double-strand break (DSB) repair. May be involved for T-DNA integration even if not absolutely required. Seems to be dispensable under normal growth conditions. The protein is DNA ligase 4 (LIG4) of Arabidopsis thaliana (Mouse-ear cress).